A 230-amino-acid polypeptide reads, in one-letter code: Ribosomal RNA large subunit methyltransferase E (230 aa).

Gly76, Trp78, Asp99, Asp115, and Asp139 together coordinate S-adenosyl-L-methionine. Lys179 (proton acceptor) is an active-site residue.

It belongs to the class I-like SAM-binding methyltransferase superfamily. RNA methyltransferase RlmE family.

It is found in the cytoplasm. The enzyme catalyses uridine(2552) in 23S rRNA + S-adenosyl-L-methionine = 2'-O-methyluridine(2552) in 23S rRNA + S-adenosyl-L-homocysteine + H(+). Specifically methylates the uridine in position 2552 of 23S rRNA at the 2'-O position of the ribose in the fully assembled 50S ribosomal subunit. In Nitrobacter winogradskyi (strain ATCC 25391 / DSM 10237 / CIP 104748 / NCIMB 11846 / Nb-255), this protein is Ribosomal RNA large subunit methyltransferase E.